The sequence spans 419 residues: UDP-N-acetylglucosamine 1-carboxyvinyltransferase (419 aa).

22–23 (KN) contacts phosphoenolpyruvate. Arg91 serves as a coordination point for UDP-N-acetyl-alpha-D-glucosamine. The Proton donor role is filled by Cys115. Cys115 carries the post-translational modification 2-(S-cysteinyl)pyruvic acid O-phosphothioketal. UDP-N-acetyl-alpha-D-glucosamine-binding positions include 120-124 (RPVDL), 160-163 (KVSV), Asp305, and Ile327.

It belongs to the EPSP synthase family. MurA subfamily.

Its subcellular location is the cytoplasm. It catalyses the reaction phosphoenolpyruvate + UDP-N-acetyl-alpha-D-glucosamine = UDP-N-acetyl-3-O-(1-carboxyvinyl)-alpha-D-glucosamine + phosphate. Its pathway is cell wall biogenesis; peptidoglycan biosynthesis. Cell wall formation. Adds enolpyruvyl to UDP-N-acetylglucosamine. The protein is UDP-N-acetylglucosamine 1-carboxyvinyltransferase of Tolumonas auensis (strain DSM 9187 / NBRC 110442 / TA 4).